Consider the following 63-residue polypeptide: Beta-defensin 6 (63 aa).

The first 22 residues, 1–22 (MKIHYLLFAFILVMLSPLAAFS), serve as a signal peptide directing secretion. Glutamine 23 carries the pyrrolidone carboxylic acid modification. 3 cysteine pairs are disulfide-bonded: cysteine 31/cysteine 59, cysteine 38/cysteine 52, and cysteine 42/cysteine 60.

The protein belongs to the beta-defensin family. In terms of tissue distribution, predominantly expressed in skeletal muscle, also expressed in esophagus, tongue, and trachea. Also expressed in lung when induced by lipopolysaccharide.

The protein resides in the secreted. Its function is as follows. Has potent antibacterial activity against E.coli (ATCC 25922). This Mus musculus (Mouse) protein is Beta-defensin 6 (Defb6).